The chain runs to 166 residues: Transcription antitermination protein NusB (166 aa).

A compositionally biased stretch (basic and acidic residues) spans 1–18; it reads MISDESDRFNPRDPKPAD. Residues 1–28 form a disordered region; it reads MISDESDRFNPRDPKPADAGKPSKSAKR.

The protein belongs to the NusB family.

Functionally, involved in transcription antitermination. Required for transcription of ribosomal RNA (rRNA) genes. Binds specifically to the boxA antiterminator sequence of the ribosomal RNA (rrn) operons. The sequence is that of Transcription antitermination protein NusB from Pseudomonas putida (strain W619).